The primary structure comprises 97 residues: Large ribosomal subunit protein uL23 (97 aa).

This sequence belongs to the universal ribosomal protein uL23 family. Part of the 50S ribosomal subunit. Contacts protein L29, and trigger factor when it is bound to the ribosome.

One of the early assembly proteins it binds 23S rRNA. One of the proteins that surrounds the polypeptide exit tunnel on the outside of the ribosome. Forms the main docking site for trigger factor binding to the ribosome. This is Large ribosomal subunit protein uL23 from Anaeromyxobacter sp. (strain Fw109-5).